We begin with the raw amino-acid sequence, 148 residues long: MSKPHLLIVEARFYDDMADALLEGAKFALEEAGATYDVITVPGALEIPAAIAMALDGADNDGTEYDGFVALGMVIRGETYHFDIVSNESSRALMDLAVSESLPIGNGILTVENDEQAWARVRRSDKDKGGFAARAALTMIELKKKLGG.

Residues Phe-13, 44–46 (ALE), and 73–75 (MVI) each bind 5-amino-6-(D-ribitylamino)uracil. A (2S)-2-hydroxy-3-oxobutyl phosphate-binding site is contributed by 78 to 79 (ET). His-81 functions as the Proton donor in the catalytic mechanism. Asn-106 serves as a coordination point for 5-amino-6-(D-ribitylamino)uracil. Arg-120 lines the (2S)-2-hydroxy-3-oxobutyl phosphate pocket.

It belongs to the DMRL synthase family.

The enzyme catalyses (2S)-2-hydroxy-3-oxobutyl phosphate + 5-amino-6-(D-ribitylamino)uracil = 6,7-dimethyl-8-(1-D-ribityl)lumazine + phosphate + 2 H2O + H(+). It functions in the pathway cofactor biosynthesis; riboflavin biosynthesis; riboflavin from 2-hydroxy-3-oxobutyl phosphate and 5-amino-6-(D-ribitylamino)uracil: step 1/2. Its function is as follows. Catalyzes the formation of 6,7-dimethyl-8-ribityllumazine by condensation of 5-amino-6-(D-ribitylamino)uracil with 3,4-dihydroxy-2-butanone 4-phosphate. This is the penultimate step in the biosynthesis of riboflavin. This is 6,7-dimethyl-8-ribityllumazine synthase from Agrobacterium fabrum (strain C58 / ATCC 33970) (Agrobacterium tumefaciens (strain C58)).